The chain runs to 1031 residues: Formin-binding protein 4 (1031 aa).

Disordered regions lie at residues 1-102, 116-143, and 166-205; these read MMGK…TTRP, AYADSDDDESDVSEKTAQSKEANGNQAT, and APVVASAPPPTPPRPEPKEAATPALSPTASNGSDTAQTPG. Residue Ser-19 is modified to Phosphoserine. Composition is skewed to low complexity over residues 41–73 and 83–92; these read DSTAAATSQSAPAAATAAAATSPAVPASAAPED and VVEVPNVVQN. Ser-120, Ser-125, and Ser-128 each carry phosphoserine. Positions 134-143 are enriched in polar residues; sequence SKEANGNQAT. Position 176 is a phosphothreonine (Thr-176). Residues 190–203 are compositionally biased toward polar residues; that stretch reads LSPTASNGSDTAQT. In terms of domain architecture, WW 1 spans 218 to 252; that stretch reads EIEMGDWQEVWDENTGCYYYWNTQTNEVTWELPQY. At Lys-294 the chain carries N6-acetyllysine. Residue Lys-305 forms a Glycyl lysine isopeptide (Lys-Gly) (interchain with G-Cter in SUMO1) linkage. A Glycyl lysine isopeptide (Lys-Gly) (interchain with G-Cter in SUMO2) cross-link involves residue Lys-339. Residue Lys-352 forms a Glycyl lysine isopeptide (Lys-Gly) (interchain with G-Cter in SUMO1); alternate linkage. A Glycyl lysine isopeptide (Lys-Gly) (interchain with G-Cter in SUMO2); alternate cross-link involves residue Lys-352. Positions 355–518 are disordered; sequence DPVSETKETS…KETEVEESSE (164 aa). The segment covering 400–414 has biased composition (acidic residues); the sequence is ESEEEEEEEEQDTLE. A compositionally biased stretch (basic and acidic residues) spans 418–430; sequence ALERKKAELRALE. Phosphoserine occurs at positions 435, 440, 443, 446, and 450. Residues 436–450 show a composition bias toward polar residues; it reads VSGSSPRSDISQPAS. Residues 457–466 show a composition bias toward basic residues; sequence IMSKRGKWKM. Residues 469-482 show a composition bias toward low complexity; the sequence is RATSPESTSRSSSK. 3 positions are modified to phosphoserine: Ser-472, Ser-507, and Ser-516. Basic and acidic residues predominate over residues 499-518; it reads DSEKIDEISDKETEVEESSE. Lys-527 participates in a covalent cross-link: Glycyl lysine isopeptide (Lys-Gly) (interchain with G-Cter in SUMO1); alternate. A Glycyl lysine isopeptide (Lys-Gly) (interchain with G-Cter in SUMO2); alternate cross-link involves residue Lys-527. In terms of domain architecture, WW 2 spans 603-637; sequence NATPKGWSCHWDRDHRRYFYVNEQSGESQWEFPDG. 3 disordered regions span residues 629 to 681, 712 to 813, and 900 to 994; these read ESQW…SLCK, PLPL…VQRS, and PAQA…RIEE. Positions 643–663 are enriched in basic and acidic residues; the sequence is SQTKEVRDESLPKLTVKDKTC. The segment covering 664–677 has biased composition (polar residues); it reads TDPNSTESSENPTG. Positions 712-741 are enriched in pro residues; the sequence is PLPLEMPPPPPPPPESPPPPPPPPPPPPPL. The segment covering 742 to 757 has biased composition (acidic residues); it reads EDGEIQEVEMEDEGSE. The span at 771-794 shows a compositional bias: polar residues; the sequence is KPSTQTTAVTSQSLVDSTASSPPS. Over residues 913 to 939 the composition is skewed to pro residues; it reads VEPPPPPPPPPTPTPPPPPPAPKVPPP. The span at 943–955 shows a compositional bias: basic residues; it reads RKGKKDKAKKSKT. Residues 971–984 are compositionally biased toward acidic residues; it reads LDEEDNSSSSEEDR. Residues Ser-977, Ser-978, and Ser-979 each carry the phosphoserine modification. Positions 985–994 are enriched in basic and acidic residues; that stretch reads ESTAQKRIEE.

In terms of assembly, binds FMN1. Interacts with the Arg/Gly-rich-flanked Pro-rich regions of KHDRBS1/SAM68. Arginine methylation in these regions has no effect on this binding. As to expression, ubiquitous. Highest levels in spleen and thymus.

This is Formin-binding protein 4 (Fnbp4) from Mus musculus (Mouse).